A 155-amino-acid chain; its full sequence is Small ribosomal subunit protein uS7cz/uS7cy (155 aa).

This sequence belongs to the universal ribosomal protein uS7 family. Part of the 30S ribosomal subunit.

It is found in the plastid. The protein resides in the chloroplast. One of the primary rRNA binding proteins, it binds directly to 16S rRNA where it nucleates assembly of the head domain of the 30S subunit. In Eucalyptus globulus subsp. globulus (Tasmanian blue gum), this protein is Small ribosomal subunit protein uS7cz/uS7cy (rps7-A).